Here is a 655-residue protein sequence, read N- to C-terminus: RNA-binding protein EWS (655 aa).

Positions 1–285 (MASTDYSTYS…GVYGQESGGF (285 aa)) are EAD (Gln/Pro/Thr-rich). Repeat copies occupy residues 8–16 (TYSQAAAQQ), 17–27 (GYSAYTAQPTQ), 28–34 (GYAQTTQ), 35–42 (AYGQQSYG), 43–50 (TYGQPTDV), 51–59 (SYTQAQTTA), 60–68 (TYGQTAYAT), 69–75 (SYGQPPT), 76–84 (GYSTPTAPQ), 85–91 (AYSQPVQ), 92–110 (GYGT…TTQA), 111–116 (SYAAQT), 117–125 (AYGTQPAYP), 126–156 (TYGQ…SSTG), 157–163 (GYNQPSL), 164–170 (GYGQSNY), 171–177 (SYPQVPG), 178–188 (SYPMQPVTAPP), 189–193 (SYPPT), 194–201 (SYSSSQPT), 202–206 (SYDQS), 207–212 (SYSQQN), 213–218 (TYGQPS), 219–224 (SYGQQS), 225–230 (SYGQQS), 231–238 (SYGQQPPT), 239–245 (SYPPQTG), 246–252 (SYSQAPS), 253–259 (QYSQQSS), 260–276 (SYGQ…SSMG), and 277–285 (VYGQESGGF). A 31 X approximate tandem repeats region spans residues 8-285 (TYSQAAAQQG…GVYGQESGGF (278 aa)). Residues 121–350 (QPAYPTYGQQ…EGPDLDLGLP (230 aa)) form a disordered region. Polar residues-rich tracts occupy residues 127-137 (YGQQPTATAPT) and 146-172 (AETS…NYSY). Residues 192-266 (PTSYSSSQPT…QSSSYGQQSS (75 aa)) show a composition bias toward low complexity. One can recognise an IQ domain in the interval 256–285 (QQSSSYGQQSSFRQDHPSSMGVYGQESGGF). Serine 266 is subject to Phosphoserine; by PKC. Residues arginine 300, arginine 302, arginine 304, arginine 309, arginine 314, arginine 317, and arginine 321 each carry the asymmetric dimethylarginine modification. Gly residues predominate over residues 308-334 (DRGGMSRGGRGGGRGGLGAGERGGFNK). Residues 335–350 (PGGPMDEGPDLDLGLP) show a composition bias toward low complexity. One can recognise an RRM domain in the interval 360-446 (SAIYVQGLND…SKLKVSLARK (87 aa)). At lysine 438 the chain carries N6-acetyllysine. Disordered regions lie at residues 447-524 (KPPM…WQCP) and 544-655 (APKP…DRPY). 2 positions are modified to asymmetric dimethylarginine: arginine 454 and arginine 463. Arginine 470 is subject to Asymmetric dimethylarginine; alternate. Arginine 470 carries the post-translational modification Omega-N-methylarginine; alternate. The segment covering 471-489 (GGPGGPGGPGGPMGRMGGR) has biased composition (gly residues). Arginine 485 is modified (omega-N-methylarginine). Arginine 489 is modified (asymmetric dimethylarginine; by PRMT8). Arginine 493, arginine 499, and arginine 502 each carry asymmetric dimethylarginine. Position 505 is an asymmetric dimethylarginine; alternate (arginine 505). At arginine 505 the chain carries Omega-N-methylarginine; alternate. The segment at 517 to 548 (RAGDWQCPNPGCGNQNFAWRTECNQCKAPKPE) adopts a RanBP2-type zinc-finger fold. A compositionally biased stretch (pro residues) spans 550–559 (FLPPPFPPPG). An asymmetric dimethylarginine mark is found at arginine 562 and arginine 564. A compositionally biased stretch (gly residues) spans 565–590 (GGPGGMRGGRGGLMDRGGPGGMFRGG). At arginine 571 the chain carries Asymmetric dimethylarginine; alternate; by PRMT8. Arginine 571 is modified (omega-N-methylarginine; alternate; by PRMT8). Arginine 574, arginine 580, arginine 588, and arginine 591 each carry asymmetric dimethylarginine. Over residues 591–605 (RGGDRGGFRGGRGMD) the composition is skewed to basic and acidic residues. Residue arginine 595 is modified to Asymmetric dimethylarginine; alternate; by PRMT8. At arginine 595 the chain carries Omega-N-methylarginine; alternate; by PRMT8. An Asymmetric dimethylarginine modification is found at arginine 599. Asymmetric dimethylarginine; by PRMT8 is present on arginine 602. Arginine 606 bears the Asymmetric dimethylarginine; alternate; by PRMT8 mark. Arginine 606 is subject to Omega-N-methylarginine; alternate; by PRMT8. The span at 606–617 (RGGFGGGRRGGP) shows a compositional bias: gly residues. Arginine 614 is subject to Asymmetric dimethylarginine; alternate. Residue arginine 614 is modified to Omega-N-methylarginine; alternate. Residues arginine 632 and arginine 635 each carry the asymmetric dimethylarginine modification. The short motif at 638-655 (PGKMDKGEHRQERRDRPY) is the Nuclear localization signal element. The span at 640-655 (KMDKGEHRQERRDRPY) shows a compositional bias: basic and acidic residues.

It belongs to the RRM TET family. In terms of assembly, binds RNA, POLR2C, SF1 and calmodulin. Interacts with PTK2B and TDRD3. Forms a complex with REC8, PRDM9, SYCP3 and SYCP1; complex formation is dependent of phosphorylated form of REC8 and requires PRDM9 bound to hotspot DNA; EWSR1 joins PRDM9 with the chromosomal axis through REC8. Phosphorylated; calmodulin-binding inhibits phosphorylation of Ser-266. In terms of processing, highly methylated on arginine residues. Methylation is mediated by PRMT1 and, at lower level by PRMT8.

It localises to the nucleus. Its subcellular location is the cytoplasm. The protein localises to the cell membrane. In terms of biological role, binds to ssRNA containing the consensus sequence 5'-AGGUAA-3'. Might function as a transcriptional repressor. The polypeptide is RNA-binding protein EWS (Ewsr1) (Mus musculus (Mouse)).